The following is a 111-amino-acid chain: MEKVLALVLLTLAVAYAAPDPRGLIINLDNGELCLNSAQCKSQCCQHDSPLGLARCADKARENSGCSPQTIYGIYYLCPCERGLTCDGDKSIIGAITNTNYGICQDPQSKK.

The N-terminal stretch at 1 to 17 (MEKVLALVLLTLAVAYA) is a signal peptide. Residues 18–22 (APDPR) constitute a propeptide, enterostatin, activation peptide. Cystine bridges form between Cys34–Cys45, Cys40–Cys56, Cys44–Cys78, Cys66–Cys86, and Cys80–Cys104.

The protein belongs to the colipase family. As to quaternary structure, forms a 1:1 stoichiometric complex with pancreatic lipase. As to expression, expressed by the pancreas.

Its subcellular location is the secreted. Colipase is a cofactor of pancreatic lipase. It allows the lipase to anchor itself to the lipid-water interface. Without colipase the enzyme is washed off by bile salts, which have an inhibitory effect on the lipase. In terms of biological role, enterostatin has a biological activity as a satiety signal. This is Colipase (CLPS) from Myocastor coypus (Coypu).